The chain runs to 195 residues: Thymidine kinase (195 aa).

ATP is bound by residues 15-22 (GSMFSGKS) and 88-91 (DEVQ). Glu-89 (proton acceptor) is an active-site residue. Positions 145, 148, 183, and 186 each coordinate Zn(2+).

Belongs to the thymidine kinase family. In terms of assembly, homotetramer.

It is found in the cytoplasm. It catalyses the reaction thymidine + ATP = dTMP + ADP + H(+). The protein is Thymidine kinase of Bacillus cereus (strain AH187).